Consider the following 290-residue polypeptide: Ig delta chain C region membrane-bound form (290 aa).

The Ig-like 1 domain occupies 5 to 105 (PDMFLLSECK…WDSQSSKRVT (101 aa)). C26 and C78 are joined by a disulfide. N-linked (GlcNAc...) asparagine glycosylation is found at N58 and N75. The segment at 89–111 (PFKFPESWDSQSSKRVTPTLQAK) is disordered. Polar residues predominate over residues 96-111 (WDSQSSKRVTPTLQAK). N-linked (GlcNAc...) asparagine glycans are attached at residues N112, N135, and N227. The Ig-like 2 domain maps to 133–233 (PSNLTVNILT…TKLNASKSLA (101 aa)). Residues 262–279 (GLWPTMCTFVALFLLTLL) traverse the membrane as a helical segment. At 280 to 290 (YSGFVTFIKVK) the chain is on the cytoplasmic side.

In terms of tissue distribution, cell lines producing IgD contain several mRNA species for Ig delta chains. In plasmacytomas, the secreted form is the major component, and the membrane-bound form is a minor component. In spleen, however, the membrane-bound form is the major component. These two forms differ in their C-terminal segments.

It localises to the cell membrane. This chain is Ig delta chain C region membrane-bound form, found in Mus musculus (Mouse).